Reading from the N-terminus, the 97-residue chain is MAKTASPGDTAAGNGTEPLPDKYETALAELESLVARMEGGALSLEDSLAAYRRGAALVAFCQQQLEKVEQQVRVLDGATLKPLSSGTAATDGDDDDL.

A disordered region spans residues 1 to 22 (MAKTASPGDTAAGNGTEPLPDK).

The protein belongs to the XseB family. Heterooligomer composed of large and small subunits.

It is found in the cytoplasm. It catalyses the reaction Exonucleolytic cleavage in either 5'- to 3'- or 3'- to 5'-direction to yield nucleoside 5'-phosphates.. Functionally, bidirectionally degrades single-stranded DNA into large acid-insoluble oligonucleotides, which are then degraded further into small acid-soluble oligonucleotides. This is Exodeoxyribonuclease 7 small subunit from Burkholderia vietnamiensis (strain G4 / LMG 22486) (Burkholderia cepacia (strain R1808)).